A 162-amino-acid chain; its full sequence is Shikimate kinase (162 aa).

Residue 10–15 participates in ATP binding; it reads GAGKST. A Mg(2+)-binding site is contributed by serine 14. Substrate-binding residues include aspartate 28, arginine 52, and glycine 73. Residue arginine 113 coordinates ATP. Residue arginine 129 participates in substrate binding.

Belongs to the shikimate kinase family. In terms of assembly, monomer. It depends on Mg(2+) as a cofactor.

The protein localises to the cytoplasm. It catalyses the reaction shikimate + ATP = 3-phosphoshikimate + ADP + H(+). The protein operates within metabolic intermediate biosynthesis; chorismate biosynthesis; chorismate from D-erythrose 4-phosphate and phosphoenolpyruvate: step 5/7. Catalyzes the specific phosphorylation of the 3-hydroxyl group of shikimic acid using ATP as a cosubstrate. In Lactococcus lactis subsp. lactis (strain IL1403) (Streptococcus lactis), this protein is Shikimate kinase.